The following is a 137-amino-acid chain: UPF0275 protein PM0489 (137 aa).

The protein belongs to the UPF0275 family.

The polypeptide is UPF0275 protein PM0489 (Pasteurella multocida (strain Pm70)).